The chain runs to 553 residues: Serine/threonine-protein phosphatase 2B catalytic subunit A1 (553 aa).

S2 is modified (N-acetylserine). Residues D119, H121, and D147 each coordinate Fe cation. The Zn(2+) site is built by D147 and N179. The active-site Proton donor is H180. Positions 228 and 317 each coordinate Zn(2+). Positions 413–447 are disordered; it reads LDPESEPKAAEETVKARANATKETGTPSDEKASSA. Residues 417–427 show a composition bias toward basic and acidic residues; sequence SEPKAAEETVK.

This sequence belongs to the PPP phosphatase family. PP-2B subfamily. As to quaternary structure, composed of two components (A and B), the A component is the catalytic subunit and the B component confers calcium sensitivity. It depends on Fe(3+) as a cofactor. Zn(2+) serves as cofactor.

The enzyme catalyses O-phospho-L-seryl-[protein] + H2O = L-seryl-[protein] + phosphate. The catalysed reaction is O-phospho-L-threonyl-[protein] + H2O = L-threonyl-[protein] + phosphate. Its function is as follows. Calcium-dependent, calmodulin-stimulated protein phosphatase. This subunit may have a role in the calmodulin activation of calcineurin. This is Serine/threonine-protein phosphatase 2B catalytic subunit A1 (CNA1) from Saccharomyces cerevisiae (strain ATCC 204508 / S288c) (Baker's yeast).